The following is a 1115-amino-acid chain: G-protein coupled receptor GRL101 (1115 aa).

Residues 1-24 (MATMSGTTIVCLIYLTTMLGNSQG) form the signal peptide. Residues 25–767 (VNLKIESPSP…SCEDLMSNHV (743 aa)) are Extracellular-facing. LDL-receptor class A domains are found at residues 36–79 (TLCS…TCGC), 77–115 (CGCLQSEFQCNHTTCIDKILRCDRNDDCSNGLDERECDI), 116–155 (YICPLGTHVKWHNHFCVPRDKQCDFLDDCGDNSDEKICER), 156–196 (RECV…ACDS), 195–232 (DSDKYFQCAEGSLIKKEFVCDGWVDCKLTFADELNCKL), 231–269 (KLCDEDDFRCSDTRCIQKSNVCDGYCDCKTCDDEEVCAN), 272–318 (YGCP…YCSN), 320–363 (SECK…SCLA), 365–403 (PKCSQDEFQCHHGKCIPISKRCDSVHDCVDWSDEMNCEN), 404–442 (HQCAANMKSCLSGHCIEEHKWCNFHRECPDGSDEKDCDP), 444–485 (PVCE…NCSQ), and 486–525 (HICLEGQFRCRKSFCINQTKVCDGTVDCLQGMWDENNCRY). Disulfide bonds link C38–C53, C46–C66, C60–C77, C79–C91, C86–C104, C98–C113, C118–C131, C138–C153, C158–C170, C165–C183, C177–C194, C202–C220, C214–C230, C233–C245, C240–C258, and C252–C267. N87 is a glycosylation site (N-linked (GlcNAc...) asparagine). An N-linked (GlcNAc...) asparagine glycan is attached at N166. N269 carries N-linked (GlcNAc...) asparagine glycosylation. 3 disulfides stabilise this stretch: C274–C291, C282–C304, and C298–C316. N318 carries an N-linked (GlcNAc...) asparagine glycan. Cystine bridges form between C322–C339, C334–C352, C346–C361, C367–C379, C374–C392, C386–C401, C406–C418, C413–C431, C425–C440, C446–C458, C453–C474, C465–C483, C488–C500, C495–C513, and C507–C523. An N-linked (GlcNAc...) asparagine glycan is attached at N482. Residue N502 is glycosylated (N-linked (GlcNAc...) asparagine). Residues 518–562 (WDENNCRYWCPHGQAICQCEGVTMDCTGQKLKEMPVQQMEEDLSK) enclose the LRRNT domain. N571 carries N-linked (GlcNAc...) asparagine glycosylation. 6 LRR repeats span residues 584-605 (KVTYLDLSRNHLTEIPIYSFQN), 608-629 (KLTHLNLADNNITSLKNGSLLG), 632-653 (NLKQLHINGNKIETIEEDTFSS), 656-677 (HLTVLDLSNQRLTHVYKNMFKG), 680-701 (QITVLNISRNQINSIDNGAFNN), and 704-725 (NVRLIDLSGNVIKDIGQKVFMG). 2 N-linked (GlcNAc...) asparagine glycosylation sites follow: N618 and N624. N-linked (GlcNAc...) asparagine glycosylation occurs at N685. A helical transmembrane segment spans residues 768 to 788 (LRVSIWVLGVIALVGNFVVIF). At 789–801 (WRVRDFRGGKVHS) the chain is on the cytoplasmic side. A helical membrane pass occupies residues 802 to 822 (FLITNLAIGDFLMGVYLLIIA). Residues 823-857 (TADTYYRGVYISHDENWKQSGLCQFAGFVSTFSSE) lie on the Extracellular side of the membrane. The chain crosses the membrane as a helical span at residues 858–878 (LSVLTLSTITLDRLICILFPL). At 879 to 887 (RRTRLGLRQ) the chain is on the cytoplasmic side. The helical transmembrane segment at 888 to 908 (AIIVMSCIWVLVFLLAVLPLL) threads the bilayer. Topologically, residues 909–941 (GFSYFENFYGRSGVCLALHVTPDRRPGWEYSVG) are extracellular. A helical membrane pass occupies residues 942-962 (VFILLNLLSFVLIASSYLWMF). Residues 963–988 (SVAKKTRSAVRTAESKNDNAMARRMT) lie on the Cytoplasmic side of the membrane. The helical transmembrane segment at 989–1009 (LIVMTDFCCWVPIIVLGFVSL) threads the bilayer. Over 1010 to 1017 (AGARADDQ) the chain is Extracellular. Residues 1018-1038 (VYAWIAVFVLPLNSATNPVIY) traverse the membrane as a helical segment. Residues 1039–1115 (TLSTAPFLGN…YYNTELHSDS (77 aa)) lie on the Cytoplasmic side of the membrane.

Belongs to the G-protein coupled receptor 1 family. Predominantly expressed in a small number of neurons within the central nervous system and to a lesser extent in the heart.

The protein localises to the cell membrane. Functionally, might directly transduce signals carried by large extracellular lipoprotein complexes into neuronal events. This chain is G-protein coupled receptor GRL101, found in Lymnaea stagnalis (Great pond snail).